Consider the following 221-residue polypeptide: tRNA (guanine-N(7)-)-methyltransferase (221 aa).

S-adenosyl-L-methionine-binding residues include E43, E68, and D123. D123 is a catalytic residue. Substrate contacts are provided by residues K127, D159, and T199 to E202.

It belongs to the class I-like SAM-binding methyltransferase superfamily. TrmB family.

It carries out the reaction guanosine(46) in tRNA + S-adenosyl-L-methionine = N(7)-methylguanosine(46) in tRNA + S-adenosyl-L-homocysteine. It participates in tRNA modification; N(7)-methylguanine-tRNA biosynthesis. Catalyzes the formation of N(7)-methylguanine at position 46 (m7G46) in tRNA. This Mycoplasma mycoides subsp. mycoides SC (strain CCUG 32753 / NCTC 10114 / PG1) protein is tRNA (guanine-N(7)-)-methyltransferase.